A 319-amino-acid chain; its full sequence is Probable NAD(P)H-dependent D-xylose reductase xyl1 (319 aa).

Tyr50 (proton donor) is an active-site residue. Residue His112 coordinates substrate. NAD(+) is bound by residues 166–167 (SN), 215–224 (SSFGPLSFLE), and 271–281 (KSNNPARLLQN).

This sequence belongs to the aldo/keto reductase family.

It catalyses the reaction xylitol + NAD(+) = D-xylose + NADH + H(+). The catalysed reaction is xylitol + NADP(+) = D-xylose + NADPH + H(+). It functions in the pathway carbohydrate metabolism; D-xylose degradation. Functionally, catalyzes the initial reaction in the xylose utilization pathway by reducing D-xylose into xylitol. Xylose is a major component of hemicelluloses such as xylan. Most fungi utilize D-xylose via three enzymatic reactions, xylose reductase (XR), xylitol dehydrogenase (XDH), and xylulokinase, to form xylulose 5-phosphate, which enters pentose phosphate pathway. The sequence is that of Probable NAD(P)H-dependent D-xylose reductase xyl1 (xyl1) from Emericella nidulans (strain FGSC A4 / ATCC 38163 / CBS 112.46 / NRRL 194 / M139) (Aspergillus nidulans).